A 305-amino-acid polypeptide reads, in one-letter code: MPFKRKDLLGLRELDVHEIEHILELAVSLKEINARPIKKVPTLRGKTVIHLFYEPSTRTRTSFDIAAKRLSADTYSITTAASSMVKGETLLDTVKNLEAMKPDVFVLRHTVSGTPHRIARHTTASVINAGDGMHEHPSQALLDMMTMLEHKKKLDGLTVAILGDIAHSRVARSNIWGLRKMGAKVILCGPITLIPPEAHTMGVEVSHKLGEIIPEADVIMVLRLQKERQQQMLLPSLREYSIYYGLTAEKLKKARRNVLIMHPGPLNRGVEISPDVADGPHSVILDQVTNGVAVRMALLYLLGQK.

Residues Arg-58 and Thr-59 each coordinate carbamoyl phosphate. L-aspartate is bound at residue Lys-86. Arg-108, His-136, and Gln-139 together coordinate carbamoyl phosphate. L-aspartate is bound by residues Arg-169 and Arg-223. Carbamoyl phosphate-binding residues include Gly-264 and Pro-265.

Belongs to the aspartate/ornithine carbamoyltransferase superfamily. ATCase family. Heterododecamer (2C3:3R2) of six catalytic PyrB chains organized as two trimers (C3), and six regulatory PyrI chains organized as three dimers (R2).

It catalyses the reaction carbamoyl phosphate + L-aspartate = N-carbamoyl-L-aspartate + phosphate + H(+). It functions in the pathway pyrimidine metabolism; UMP biosynthesis via de novo pathway; (S)-dihydroorotate from bicarbonate: step 2/3. Catalyzes the condensation of carbamoyl phosphate and aspartate to form carbamoyl aspartate and inorganic phosphate, the committed step in the de novo pyrimidine nucleotide biosynthesis pathway. This chain is Aspartate carbamoyltransferase catalytic subunit, found in Syntrophobacter fumaroxidans (strain DSM 10017 / MPOB).